A 228-amino-acid chain; its full sequence is Ribonuclease 3 (228 aa).

Positions 8–130 (LKRLERRVDY…IIGAAFLDSD (123 aa)) constitute an RNase III domain. Glu-43 contributes to the Mg(2+) binding site. Residue Asp-47 is part of the active site. Mg(2+) contacts are provided by Asp-116 and Glu-119. Glu-119 is a catalytic residue. The 70-residue stretch at 157–226 (DPKTRLQEHL…ANKMLDSLSG (70 aa)) folds into the DRBM domain.

It belongs to the ribonuclease III family. As to quaternary structure, homodimer. Mg(2+) is required as a cofactor.

It localises to the cytoplasm. The enzyme catalyses Endonucleolytic cleavage to 5'-phosphomonoester.. Its function is as follows. Digests double-stranded RNA. Involved in the processing of primary rRNA transcript to yield the immediate precursors to the large and small rRNAs (23S and 16S). Processes some mRNAs, and tRNAs when they are encoded in the rRNA operon. Processes pre-crRNA and tracrRNA of type II CRISPR loci if present in the organism. This Psychromonas ingrahamii (strain DSM 17664 / CCUG 51855 / 37) protein is Ribonuclease 3.